Here is a 102-residue protein sequence, read N- to C-terminus: MQLSFSAIAILLAFAVNHATADSHQNLVCVRTYPDNNSAENLEATRCACDWLKKNGKCDDCTIWENRLCHSDAKSLDGNEFEDACVRKCPNLGATGSSIPPA.

Residues 1–21 (MQLSFSAIAILLAFAVNHATA) form the signal peptide. N-linked (GlcNAc...) asparagine glycosylation occurs at N36.

The protein localises to the secreted. Functionally, secreted effector involved in biotrophic colonization of plant cells. Participates in transition from the biotrophic to the necrotrophic phase of Magnaporthe oryzae. Elicits rice basic defense responses during the early stage of interaction and promotes cell death in the late stage of compatible interaction. The protein is Biotrophy-associated secreted protein 4 of Pyricularia oryzae (strain 70-15 / ATCC MYA-4617 / FGSC 8958) (Rice blast fungus).